The chain runs to 69 residues: Beta-defensin 122 (69 aa).

Residues 1–19 form the signal peptide; sequence MKPFLVTLAVLLLFFQVTA. 3 cysteine pairs are disulfide-bonded: C26–C53, C33–C47, and C37–C54.

It belongs to the beta-defensin family.

It is found in the secreted. Has antibacterial activity. The chain is Beta-defensin 122 (DEFB122) from Macaca mulatta (Rhesus macaque).